The chain runs to 804 residues: Endoplasmin (804 aa).

The signal sequence occupies residues 1–21 (MRVLWVLGLCCVLLTFGFVRA). An SRT pseudosubstrate motif motif is present at residues 42-44 (SRT). The N-linked (GlcNAc...) asparagine glycan is linked to Asn-62. Ser-64 is subject to Phosphoserine. The N-linked (GlcNAc...) asparagine glycan is linked to Asn-107. Residues Asn-107, Asp-149, and Asn-162 each contribute to the ATP site. Lys-168 is modified (N6-(2-hydroxyisobutyryl)lysine). Residue Ser-172 is modified to Phosphoserine. Phe-199 contributes to the ATP binding site. Asn-217 carries an N-linked (GlcNAc...) asparagine glycan. Residues 288-323 (TVEEPLEEDETAQEEKEEADDEAAVEEEEEEKKPKT) form a disordered region. The segment covering 289-317 (VEEPLEEDETAQEEKEEADDEAAVEEEEE) has biased composition (acidic residues). Position 403 is a phosphoserine (Ser-403). Lys-404 is modified (N6-succinyllysine). N-linked (GlcNAc...) asparagine glycosylation is present at Asn-445. Position 447 is a phosphoserine (Ser-447). The residue at position 479 (Lys-479) is an N6-acetyllysine. 2 N-linked (GlcNAc...) asparagine glycosylation sites follow: Asn-481 and Asn-502. Position 633 is an N6-succinyllysine (Lys-633). The segment at 749-804 (IDPEAQVEEEPEEEPEDTTEDTTDDSEQDEEETDAGAEEEEEEQETEKEPTEKDEL) is disordered. The span at 753-794 (AQVEEEPEEEPEDTTEDTTDDSEQDEEETDAGAEEEEEEQET) shows a compositional bias: acidic residues. A compositionally biased stretch (basic and acidic residues) spans 795-804 (EKEPTEKDEL). The short motif at 801–804 (KDEL) is the Prevents secretion from ER element.

Belongs to the heat shock protein 90 family. In terms of assembly, homodimer; disulfide-linked. Component of an EIF2 complex at least composed of CELF1/CUGBP1, CALR, CALR3, EIF2S1, EIF2S2, HSP90B1 and HSPA5. Part of a large chaperone multiprotein complex comprising DNAJB11, HSP90B1, HSPA5, HYOU, PDIA2, PDIA4, PDIA6, PPIB, SDF2L1, UGGT1 and very small amounts of ERP29, but not, or at very low levels, CALR nor CANX. Interacts with AIMP1; regulates its retention in the endoplasmic reticulum. Hyperglycosylated form interacts with OS9; promoting its degradation by the endoplasmic reticulum associated degradation (ERAD). Interacts with CNPY3. This interaction is disrupted in the presence of ATP. Interacts with TLR4 and TLR9, but not with TLR3. Interacts with MZB1 in a calcium-dependent manner. Interacts with METTL23. Interacts with IL1B; the interaction facilitates cargo translocation into the ERGIC. Interacts with EIF2AK3. Post-translationally, phosphorylated by CK2. In terms of processing, N-glycosylated cotranslationally at Asn-217 by STT3A-containing OST-A complex: this glycosylation is constitutive. In response to various stress, 5 additional facultative sites (Asn-62, Asn-107, Asn-445, Asn-481 and Asn-502) can be glycosylated post-translationally by STT3B-containing OST-B complex, leading to a hyperglycosylated form that is degraded by the ER-associated degradation (ERAD) pathway. In normal conditions, the OST-A complex together with CCDC134 prevent glycosylation at facultative sites during protein folding, thereby preventing hyperglycosylation. Mechanistically, nascent HSP90B1 is tethered during translation to a specialized CCDC134-containing translocon that forms a microenvironment for its folding, in which STT3A associates with the SRT pseudosubstrate motif, and prevents access to facultative glycosylation sites until folding is completed, rendering its facultative sites inaccessible to the OST-B complex.

It is found in the endoplasmic reticulum lumen. The protein localises to the sarcoplasmic reticulum lumen. Its subcellular location is the melanosome. The catalysed reaction is ATP + H2O = ADP + phosphate + H(+). ATP-dependent chaperone involved in the processing of proteins in the endoplasmic reticulum, regulating their transport. Together with MESD, acts as a modulator of the Wnt pathway by promoting the folding of LRP6, a coreceptor of the canonical Wnt pathway. When associated with CNPY3, required for proper folding of Toll-like receptors. Promotes folding and trafficking of TLR4 to the cell surface. May participate in the unfolding of cytosolic leaderless cargos (lacking the secretion signal sequence) such as the interleukin 1/IL-1 to facilitate their translocation into the ERGIC (endoplasmic reticulum-Golgi intermediate compartment) and secretion; the translocation process is mediated by the cargo receptor TMED10. This is Endoplasmin from Rattus norvegicus (Rat).